Consider the following 192-residue polypeptide: Phosphoheptose isomerase (192 aa).

The SIS domain occupies 37-192 (LADSFKQEGK…IQLVEKEMAK (156 aa)). 52-54 (NGG) contributes to the substrate binding site. Positions 61 and 65 each coordinate Zn(2+). Residues Glu-65, 93-94 (ND), 119-121 (STS), Ser-124, and Gln-172 each bind substrate. The Zn(2+) site is built by Gln-172 and His-180.

It belongs to the SIS family. GmhA subfamily. Homotetramer. It depends on Zn(2+) as a cofactor.

The protein localises to the cytoplasm. The enzyme catalyses 2 D-sedoheptulose 7-phosphate = D-glycero-alpha-D-manno-heptose 7-phosphate + D-glycero-beta-D-manno-heptose 7-phosphate. The protein operates within carbohydrate biosynthesis; D-glycero-D-manno-heptose 7-phosphate biosynthesis; D-glycero-alpha-D-manno-heptose 7-phosphate and D-glycero-beta-D-manno-heptose 7-phosphate from sedoheptulose 7-phosphate: step 1/1. Its function is as follows. Catalyzes the isomerization of sedoheptulose 7-phosphate in D-glycero-D-manno-heptose 7-phosphate. The polypeptide is Phosphoheptose isomerase (Aeromonas salmonicida (strain A449)).